The following is a 658-amino-acid chain: ATP-dependent RNA helicase MSS116, mitochondrial (658 aa).

The N-terminal 35 residues, 1–35, are a transit peptide targeting the mitochondrion; sequence MFRVTGIATARAVALQPFRAPLGVIRRFGISATAS. Residues 40 to 79 are compositionally biased toward basic and acidic residues; it reads HGHDMQSRNGSRWDSRRQGDRRSSRWEGRGSDREDGERGS. A disordered region spans residues 40-104; the sequence is HGHDMQSRNG…DGAAREGFSL (65 aa). Residues 126 to 154 carry the Q motif motif; that stretch reads TLVEEGVLSNELYEMLQSRGFDKLTPVQQ. In terms of domain architecture, Helicase ATP-binding spans 158 to 343; it reads KPILQTEHDV…NSIMNHAKCL (186 aa). 171–178 is a binding site for ATP; it reads AKTGTGKT. A DEAD box motif is present at residues 284 to 287; that stretch reads DEAD. The 157-residue stretch at 372 to 528 folds into the Helicase C-terminal domain; it reads NITASLYKIR…TFDAAAQELS (157 aa).

Belongs to the DEAD box helicase family. DDX18/HAS1 subfamily.

It is found in the mitochondrion matrix. The enzyme catalyses ATP + H2O = ADP + phosphate + H(+). Functionally, ATP-dependent RNA helicase required for mitochondrial splicing of group I and II introns. Also required for efficient mitochondrial translation. The polypeptide is ATP-dependent RNA helicase MSS116, mitochondrial (MSS116) (Eremothecium gossypii (strain ATCC 10895 / CBS 109.51 / FGSC 9923 / NRRL Y-1056) (Yeast)).